A 137-amino-acid polypeptide reads, in one-letter code: Ribosome-binding factor A (137 aa).

Belongs to the RbfA family. As to quaternary structure, monomer. Binds 30S ribosomal subunits, but not 50S ribosomal subunits or 70S ribosomes.

The protein resides in the cytoplasm. One of several proteins that assist in the late maturation steps of the functional core of the 30S ribosomal subunit. Associates with free 30S ribosomal subunits (but not with 30S subunits that are part of 70S ribosomes or polysomes). Required for efficient processing of 16S rRNA. May interact with the 5'-terminal helix region of 16S rRNA. In Trichodesmium erythraeum (strain IMS101), this protein is Ribosome-binding factor A.